The primary structure comprises 69 residues: Large ribosomal subunit protein bL31 (69 aa).

Residues Cys-16, Cys-18, Cys-37, and Cys-40 each contribute to the Zn(2+) site.

It belongs to the bacterial ribosomal protein bL31 family. Type A subfamily. In terms of assembly, part of the 50S ribosomal subunit. The cofactor is Zn(2+).

Functionally, binds the 23S rRNA. The protein is Large ribosomal subunit protein bL31 of Buchnera aphidicola subsp. Baizongia pistaciae (strain Bp).